Here is a 464-residue protein sequence, read N- to C-terminus: Soluble pyridine nucleotide transhydrogenase (464 aa).

Residue 35–44 (DSRRQVGGNC) coordinates FAD.

It belongs to the class-I pyridine nucleotide-disulfide oxidoreductase family. It depends on FAD as a cofactor.

It is found in the cytoplasm. The catalysed reaction is NAD(+) + NADPH = NADH + NADP(+). Its function is as follows. Conversion of NADPH, generated by peripheral catabolic pathways, to NADH, which can enter the respiratory chain for energy generation. The sequence is that of Soluble pyridine nucleotide transhydrogenase from Pseudomonas syringae pv. syringae (strain B728a).